Here is a 292-residue protein sequence, read N- to C-terminus: uncharacterized protein (292 aa).

Positions M1–N58 constitute an HTH lysR-type domain. The segment at residues V18 to A37 is a DNA-binding region (H-T-H motif).

Belongs to the LysR transcriptional regulatory family.

This is an uncharacterized protein from Bacillus subtilis (strain 168).